The sequence spans 78 residues: DNA-directed RNA polymerase subunit Rpo5 (78 aa).

This sequence belongs to the archaeal Rpo5/eukaryotic RPB5 RNA polymerase subunit family. Part of the RNA polymerase complex.

Its subcellular location is the cytoplasm. It catalyses the reaction RNA(n) + a ribonucleoside 5'-triphosphate = RNA(n+1) + diphosphate. DNA-dependent RNA polymerase (RNAP) catalyzes the transcription of DNA into RNA using the four ribonucleoside triphosphates as substrates. The protein is DNA-directed RNA polymerase subunit Rpo5 of Methanocaldococcus jannaschii (strain ATCC 43067 / DSM 2661 / JAL-1 / JCM 10045 / NBRC 100440) (Methanococcus jannaschii).